A 572-amino-acid chain; its full sequence is MPGETEEPRSPEQQDQEGGPAAAADAASEELRPGAAAAPAAPAETASSRVLRGGRDRGRTAAAAAAAAAAVSRRRKAEYPRRRRSSPSNRPPDGPGHQPAAAKPPSPAQGKKSPRLQCIEKLTTDKDPKEEKEDDSVLPQEVSITTTRASRSWRSSSRTSISRLRDSENTRSSRSKTGSLQLVCKTEPITDQLDYDVPEEHQSPGGISSDEEEEEEEEMLISEEEIPFKDDPRDETYKPHLERETPKPRRKSGKVKEEKEKKEIKVEVEVEVKEEENEIREDEEPPRKRGRRRKDDKSPRLPKRRKKPPIQYVRCEMEGCGTVLAHPRYLQHHIKYQHLLKKKYVCPHPSCGRLFRLQKQLLRHAKHHTDQRDYICEYCARAFKSSHNLAVHRMIHTGEKPLQCEICGFTCRQKASLNWHMKKHDADSFYQFSCNICGKKFEKKDSVVAHKAKSHPEVLIAEALAANAGALITSTDILGTNPEPLTQPADGQGLPLLPEPLGNSTAGECLLLEAEGMSKSYCSGTERVSLMADGKIFVGSGSSGGTEGLVMNSDILGATTEVLIEDTDSTGP.

Basic and acidic residues predominate over residues 1–12 (MPGETEEPRSPE). A disordered region spans residues 1–308 (MPGETEEPRS…PRLPKRRKKP (308 aa)). The span at 61-70 (AAAAAAAAAA) shows a compositional bias: low complexity. Residues 72–85 (SRRRKAEYPRRRRS) are compositionally biased toward basic residues. Phosphoserine is present on residues Ser-86 and Ser-106. A compositionally biased stretch (basic and acidic residues) spans 122-131 (LTTDKDPKEE). A compositionally biased stretch (low complexity) spans 143–162 (SITTTRASRSWRSSSRTSIS). Residues 209-225 (SDEEEEEEEEMLISEEE) are compositionally biased toward acidic residues. 2 stretches are compositionally biased toward basic and acidic residues: residues 226–247 (IPFK…ETPK) and 254–271 (KVKE…VEVE). The span at 272–284 (VKEEENEIREDEE) shows a compositional bias: acidic residues. C2H2-type zinc fingers lie at residues 313 to 338 (VRCE…KYQH), 344 to 368 (YVCP…AKHH), 374 to 396 (YICE…RMIH), 402 to 424 (LQCE…MKKH), and 432 to 455 (FSCN…AKSH). The interaction with MAP3K14/NIK stretch occupies residues 340–370 (LKKKYVCPHPSCGRLFRLQKQLLRHAKHHTD).

It belongs to the krueppel C2H2-type zinc-finger protein family. Interacts with MAP3K14/NIK. Found in all the examined tissues including brain, heart, kidney, lung, liver, spleen, thymus, skeletal muscle, ovary and testis.

Its subcellular location is the nucleus. The enzyme catalyses S-ubiquitinyl-[E2 ubiquitin-conjugating enzyme]-L-cysteine + [acceptor protein]-L-lysine = [E2 ubiquitin-conjugating enzyme]-L-cysteine + N(6)-ubiquitinyl-[acceptor protein]-L-lysine.. The protein operates within protein modification; protein ubiquitination. Functionally, atypical E3 ubiquitin-protein ligase that mediates 'Lys-63'-linked ubiquitination of MAP3K14/NIK, leading to stabilize and activate MAP3K14/NIK. It thereby acts as an activator of the non-canonical NF-kappa-B2/NFKB2 pathway. May also play an important role in cell proliferation and/or anti-apoptosis. This Mus musculus (Mouse) protein is E3 ubiquitin-protein ligase ZFP91 (Zfp91).